The chain runs to 98 residues: NADH-ubiquinone oxidoreductase chain 4L (98 aa).

Transmembrane regions (helical) follow at residues 1 to 21 (MSLV…GLLM), 30 to 50 (LLCL…TILT), and 61 to 81 (IVLL…LVMV).

The protein belongs to the complex I subunit 4L family. As to quaternary structure, core subunit of respiratory chain NADH dehydrogenase (Complex I) which is composed of 45 different subunits.

The protein resides in the mitochondrion inner membrane. The catalysed reaction is a ubiquinone + NADH + 5 H(+)(in) = a ubiquinol + NAD(+) + 4 H(+)(out). Its function is as follows. Core subunit of the mitochondrial membrane respiratory chain NADH dehydrogenase (Complex I) which catalyzes electron transfer from NADH through the respiratory chain, using ubiquinone as an electron acceptor. Part of the enzyme membrane arm which is embedded in the lipid bilayer and involved in proton translocation. This Crocidura russula (Greater white-toothed shrew) protein is NADH-ubiquinone oxidoreductase chain 4L (MT-ND4L).